Here is a 659-residue protein sequence, read N- to C-terminus: RNA-binding E3 ubiquitin-protein ligase MEX3C (659 aa).

Low complexity predominate over residues 1-15; the sequence is MPSGSSAALALAAAP. The tract at residues 1 to 140 is disordered; the sequence is MPSGSSAALA…EEAEEEDRSS (140 aa). Residues 16 to 37 show a composition bias toward pro residues; it reads APLPQPPPPPPPPPPPLPPPSG. Residues 64 to 82 are compositionally biased toward low complexity; it reads EPGAPALRAPAAAAQGQAR. The span at 83–94 shows a compositional bias: basic and acidic residues; it reads RAAELSPEERAP. The residue at position 88 (Ser88) is a Phosphoserine. Acidic residues predominate over residues 104 to 137; it reads AELELEEDEEEGEEAELDGDLLEEEELEEAEEED. KH domains follow at residues 232–293 and 326–387; these read TTEC…KREI and QTTV…REEI. The tract at residues 513–569 is disordered; it reads FEPVNPLSGFGSDPSGNMKTQRRGSQPSTPRLSPTFPESIEHPLARRVRSDPPSTGN. Over residues 526–544 the composition is skewed to polar residues; the sequence is PSGNMKTQRRGSQPSTPRL. A phosphoserine mark is found at Ser537 and Ser545. The span at 551-562 shows a compositional bias: basic and acidic residues; the sequence is SIEHPLARRVRS. An RING-type zinc finger spans residues 608 to 648; the sequence is CVICFENEVIAALVPCGHNLFCMECANKICEKRTPSCPVCQ.

In terms of assembly, interacts with USP7, which antagonizes the ability to degrade mRNA. In terms of tissue distribution, highest levels found in fetal brain and testis. Also expressed in thymus, salivary gland and uterus. Highly expressed in cells of the innate immune system, in particular activated NK cells. Week expression in the intestine.

Its subcellular location is the cytoplasm. The protein resides in the nucleus. It carries out the reaction S-ubiquitinyl-[E2 ubiquitin-conjugating enzyme]-L-cysteine + [acceptor protein]-L-lysine = [E2 ubiquitin-conjugating enzyme]-L-cysteine + N(6)-ubiquitinyl-[acceptor protein]-L-lysine.. E3 ubiquitin ligase responsible for the post-transcriptional regulation of common HLA-A allotypes. Binds to the 3' UTR of HLA-A2 mRNA, and regulates its levels by promoting mRNA decay. RNA binding is sufficient to prevent translation, but ubiquitin ligase activity is required for mRNA degradation. The polypeptide is RNA-binding E3 ubiquitin-protein ligase MEX3C (MEX3C) (Homo sapiens (Human)).